Here is a 395-residue protein sequence, read N- to C-terminus: Succinyl-diaminopimelate desuccinylase (395 aa).

Position 74 (His-74) interacts with Zn(2+). The active site involves Asp-76. Asp-107 serves as a coordination point for Zn(2+). Glu-141 (proton acceptor) is an active-site residue. Residues Glu-142, Glu-170, and His-368 each coordinate Zn(2+).

It belongs to the peptidase M20A family. DapE subfamily. As to quaternary structure, homodimer. The cofactor is Zn(2+). Co(2+) serves as cofactor.

The enzyme catalyses N-succinyl-(2S,6S)-2,6-diaminopimelate + H2O = (2S,6S)-2,6-diaminopimelate + succinate. The protein operates within amino-acid biosynthesis; L-lysine biosynthesis via DAP pathway; LL-2,6-diaminopimelate from (S)-tetrahydrodipicolinate (succinylase route): step 3/3. In terms of biological role, catalyzes the hydrolysis of N-succinyl-L,L-diaminopimelic acid (SDAP), forming succinate and LL-2,6-diaminopimelate (DAP), an intermediate involved in the bacterial biosynthesis of lysine and meso-diaminopimelic acid, an essential component of bacterial cell walls. This Brucella melitensis biotype 2 (strain ATCC 23457) protein is Succinyl-diaminopimelate desuccinylase.